A 412-amino-acid polypeptide reads, in one-letter code: Probable ribonuclease FAU-1 (412 aa).

This sequence belongs to the FAU-1 family.

Probable RNase involved in rRNA stability through maturation and/or degradation of precursor rRNAs. Binds to RNA in loop regions with AU-rich sequences. This Sulfurisphaera tokodaii (strain DSM 16993 / JCM 10545 / NBRC 100140 / 7) (Sulfolobus tokodaii) protein is Probable ribonuclease FAU-1.